Consider the following 239-residue polypeptide: Pyridoxine 5'-phosphate synthase (239 aa).

Asn7 is a 3-amino-2-oxopropyl phosphate binding site. 9-10 (DH) serves as a coordination point for 1-deoxy-D-xylulose 5-phosphate. Arg18 contributes to the 3-amino-2-oxopropyl phosphate binding site. His43 (proton acceptor) is an active-site residue. Arg45 and His50 together coordinate 1-deoxy-D-xylulose 5-phosphate. Glu70 functions as the Proton acceptor in the catalytic mechanism. Thr100 is a 1-deoxy-D-xylulose 5-phosphate binding site. His191 acts as the Proton donor in catalysis. 3-amino-2-oxopropyl phosphate contacts are provided by residues Gly192 and 213–214 (GH).

Belongs to the PNP synthase family. As to quaternary structure, homooctamer; tetramer of dimers.

The protein localises to the cytoplasm. The enzyme catalyses 3-amino-2-oxopropyl phosphate + 1-deoxy-D-xylulose 5-phosphate = pyridoxine 5'-phosphate + phosphate + 2 H2O + H(+). The protein operates within cofactor biosynthesis; pyridoxine 5'-phosphate biosynthesis; pyridoxine 5'-phosphate from D-erythrose 4-phosphate: step 5/5. Catalyzes the complicated ring closure reaction between the two acyclic compounds 1-deoxy-D-xylulose-5-phosphate (DXP) and 3-amino-2-oxopropyl phosphate (1-amino-acetone-3-phosphate or AAP) to form pyridoxine 5'-phosphate (PNP) and inorganic phosphate. The protein is Pyridoxine 5'-phosphate synthase of Trichlorobacter lovleyi (strain ATCC BAA-1151 / DSM 17278 / SZ) (Geobacter lovleyi).